Here is a 70-residue protein sequence, read N- to C-terminus: DNA gyrase inhibitor YacG (70 aa).

Positions 20, 23, 35, and 39 each coordinate Zn(2+).

Belongs to the DNA gyrase inhibitor YacG family. As to quaternary structure, interacts with GyrB. The cofactor is Zn(2+).

Functionally, inhibits all the catalytic activities of DNA gyrase by preventing its interaction with DNA. Acts by binding directly to the C-terminal domain of GyrB, which probably disrupts DNA binding by the gyrase. The chain is DNA gyrase inhibitor YacG from Rhizobium etli (strain CIAT 652).